We begin with the raw amino-acid sequence, 450 residues long: CBL-interacting protein kinase 23 (450 aa).

The 256-residue stretch at 13–268 (YELGRTLGEG…IAELINNEWF (256 aa)) folds into the Protein kinase domain. Residues 19–27 (LGEGTFAKV) and Lys42 contribute to the ATP site. Residue Asp136 is the Proton acceptor of the active site. The segment at 154–183 (DFGLSALSQQVREDGLLHTTCGTPNYVAPE) is activation loop. An NAF domain is found at 306-331 (EERPSVMNAFELISTSQGLNLGTLFE). Residues 339-368 (KRETRFASRLPANEILSKIEAAAGPMGFNV) are PPI.

It belongs to the protein kinase superfamily. CAMK Ser/Thr protein kinase family. SNF1 subfamily. The cofactor is Mn(2+).

It catalyses the reaction L-seryl-[protein] + ATP = O-phospho-L-seryl-[protein] + ADP + H(+). The catalysed reaction is L-threonyl-[protein] + ATP = O-phospho-L-threonyl-[protein] + ADP + H(+). CIPK serine-threonine protein kinases interact with CBL proteins. Binding of a CBL protein to the regulatory NAF domain of CIPK protein lead to the activation of the kinase in a calcium-dependent manner. This Oryza sativa subsp. japonica (Rice) protein is CBL-interacting protein kinase 23 (CIPK23).